A 260-amino-acid chain; its full sequence is Type III pantothenate kinase (260 aa).

6–13 lines the ATP pocket; the sequence is DAGNTNIV. 108 to 111 lines the substrate pocket; that stretch reads GADR. Asp110 functions as the Proton acceptor in the catalytic mechanism. K(+) is bound at residue Asp130. Thr133 serves as a coordination point for ATP. Thr187 serves as a coordination point for substrate.

It belongs to the type III pantothenate kinase family. Homodimer. NH4(+) is required as a cofactor. K(+) serves as cofactor.

It localises to the cytoplasm. It carries out the reaction (R)-pantothenate + ATP = (R)-4'-phosphopantothenate + ADP + H(+). It functions in the pathway cofactor biosynthesis; coenzyme A biosynthesis; CoA from (R)-pantothenate: step 1/5. Its function is as follows. Catalyzes the phosphorylation of pantothenate (Pan), the first step in CoA biosynthesis. The protein is Type III pantothenate kinase of Rhizorhabdus wittichii (strain DSM 6014 / CCUG 31198 / JCM 15750 / NBRC 105917 / EY 4224 / RW1) (Sphingomonas wittichii).